A 300-amino-acid chain; its full sequence is 4-hydroxy-tetrahydrodipicolinate synthase (300 aa).

T46 lines the pyruvate pocket. Y135 serves as the catalytic Proton donor/acceptor. K163 functions as the Schiff-base intermediate with substrate in the catalytic mechanism. V205 contacts pyruvate.

The protein belongs to the DapA family. In terms of assembly, homotetramer; dimer of dimers.

Its subcellular location is the cytoplasm. It carries out the reaction L-aspartate 4-semialdehyde + pyruvate = (2S,4S)-4-hydroxy-2,3,4,5-tetrahydrodipicolinate + H2O + H(+). It participates in amino-acid biosynthesis; L-lysine biosynthesis via DAP pathway; (S)-tetrahydrodipicolinate from L-aspartate: step 3/4. Its function is as follows. Catalyzes the condensation of (S)-aspartate-beta-semialdehyde [(S)-ASA] and pyruvate to 4-hydroxy-tetrahydrodipicolinate (HTPA). The protein is 4-hydroxy-tetrahydrodipicolinate synthase of Koribacter versatilis (strain Ellin345).